The sequence spans 318 residues: Glutathione synthetase (318 aa).

Residues 125–311 form the ATP-grasp domain; the sequence is EKLFTAWFPE…ITGKLMDAIE (187 aa). An ATP-binding site is contributed by 151 to 208; it reads FRQEHGDIILKPLDGMGGASIFRVKENDPNVSVIIETLTNHGQNYAMAQTFVPDISNG. Mg(2+) is bound by residues glutamate 282 and asparagine 284.

Belongs to the prokaryotic GSH synthase family. Mg(2+) serves as cofactor. Requires Mn(2+) as cofactor.

It carries out the reaction gamma-L-glutamyl-L-cysteine + glycine + ATP = glutathione + ADP + phosphate + H(+). The protein operates within sulfur metabolism; glutathione biosynthesis; glutathione from L-cysteine and L-glutamate: step 2/2. In Vibrio vulnificus (strain YJ016), this protein is Glutathione synthetase.